A 43-amino-acid polypeptide reads, in one-letter code: Protein PsbN (43 aa).

Residues 7–27 form a helical membrane-spanning segment; it reads VAIFISGLLVSFTGYALYTAF.

This sequence belongs to the PsbN family.

The protein localises to the plastid. It localises to the chloroplast thylakoid membrane. May play a role in photosystem I and II biogenesis. This Daucus carota (Wild carrot) protein is Protein PsbN.